Here is an 821-residue protein sequence, read N- to C-terminus: Calpain-3 (821 aa).

The disordered stretch occupies residues 1 to 37 (MPTVISPTVAPRTGAEPRSPGPVPHPAQGKTTEAGGG). A Calpain catalytic domain is found at 74–417 (LYLDPEFPPD…FTKLEICNLT (344 aa)). Catalysis depends on residues C129, H334, and N358. A domain III region spans residues 418–586 (ADALESDKLQ…KRNLSEEAEN (169 aa)). The linker stretch occupies residues 587–649 (TISVDRPVKK…RPGHTDQESE (63 aa)). Residues 603–651 (IFVSDRANSNKELGVDQEAEEGKDKTGPDKQGESPQPRPGHTDQESEEQ) are disordered. The span at 622 to 634 (EEGKDKTGPDKQG) shows a compositional bias: basic and acidic residues. EF-hand domains follow at residues 649–683 (EEQQ…VVNK), 692–725 (FTLE…KKIK), 722–757 (KKIK…AGFH), and 787–821 (VRLE…TMYA). The domain IV stretch occupies residues 650 to 820 (EQQQFRNIFR…VLEWLQLTMY (171 aa)). A662, D665, E667, E672, D705, D707, S709, R711, E716, D735, D737, S739, T741, E746, D800, D802, D804, and I806 together coordinate Ca(2+).

This sequence belongs to the peptidase C2 family. Homodimer; via EF-hand domain 4. Interacts with TTN/titin. Interacts with CMYA5; this interaction, which results in CMYA5 proteolysis, may protect CAPN3 from autolysis. Interacts with SIMC1. Interacts with UTP25; the interaction is required for CAPN3 translocation to the nucleolus. In terms of tissue distribution, skeletal muscle.

The protein localises to the cytoplasm. The protein resides in the nucleus. It is found in the nucleolus. It carries out the reaction Broad endopeptidase activity.. Activated by micromolar concentrations of calcium and inhibited by calpastatin. Its function is as follows. Calcium-regulated non-lysosomal thiol-protease. Proteolytically cleaves CTBP1 at 'His-399'. Mediates, with UTP25, the proteasome-independent degradation of p53/TP53. This chain is Calpain-3 (Capn3), found in Rattus norvegicus (Rat).